The primary structure comprises 263 residues: Polyglutamine-binding protein 1 (263 aa).

The 35-residue stretch at 46-80 (EGLPPSWYKVFDPSCGLPYYWNVDTDLVSWLSPHD) folds into the WW domain. Phosphoserine is present on Ser-94. The disordered stretch occupies residues 94–263 (SSNADAEEKL…AEASRTKQQD (170 aa)). Residues 99–173 (AEEKLDRSHE…DKVDREESKE (75 aa)) are compositionally biased toward basic and acidic residues. 14 repeat units span residues 104–110 (DRSHEKS), 111–117 (DRGHEKS), 118–124 (DRGHEKS), 125–131 (DRSHEKS), 132–138 (ERNHEKS), 139–140 (DR), 141–142 (DR), 143–144 (ER), 150–151 (DR), 152–153 (ER), 154–155 (ER), 156–157 (DR), 158–159 (DR), and 160–161 (DR). A 5 X 7 AA approximate tandem repeats of D-R-[SG]-H-D-K-S region spans residues 104-138 (DRSHEKSDRGHEKSDRGHEKSDRSHEKSERNHEKS). The interval 139-144 (DRDRER) is 3 X 2 AA tandem repeats of [DE]-R. Residues 150–161 (DRERERDRDRDR) form a 6 X 2 AA tandem repeats of [DE]-R region. Positions 243 to 253 (YPSPGAVLRAN) are important for interaction with TXNL4A. Ser-245 is modified (phosphoserine).

Interacts with POU3F2/Brn-2, ATXN1, TXNL4A, HTT and AR. Interaction with ATXN1 correlates positively with the length of the polyglutamine tract. Interacts with RNA polymerase II large subunit in a phosphorylation-dependent manner. Forms a ternary complex with ATXN1 mutant and phosphorylated RNA polymerase II. Interacts (via C-terminus) with TXNL4A and CD2BP2. Interacts (via WW domain) with ATN1 and SF3B1, and may interact with additional splice factors. Interacts (via WW domain) with WBP11; Leading to reduce interaction between PQBP1 and TXNL4A. Interacts with CAPRIN1. Interacts with DDX1. Interacts with SFPQ. Interacts with KHSRP.

The protein localises to the nucleus. The protein resides in the nucleus speckle. It localises to the cytoplasmic granule. In terms of biological role, intrinsically disordered protein that acts as a scaffold, and which is involved in different processes, such as pre-mRNA splicing, transcription regulation, innate immunity and neuron development. Interacts with splicing-related factors via the intrinsically disordered region and regulates alternative splicing of target pre-mRNA species. May suppress the ability of POU3F2 to transactivate the DRD1 gene in a POU3F2 dependent manner. Can activate transcription directly or via association with the transcription machinery. May be involved in ATXN1 mutant-induced cell death. The interaction with ATXN1 mutant reduces levels of phosphorylated RNA polymerase II large subunit. Involved in the assembly of cytoplasmic stress granule, possibly by participating in the transport of neuronal RNA granules. Also acts as an innate immune sensor of infection by retroviruses, by detecting the presence of reverse-transcribed DNA in the cytosol. Directly binds retroviral reverse-transcribed DNA in the cytosol and interacts with CGAS, leading to activate the cGAS-STING signaling pathway, triggering type-I interferon production. The polypeptide is Polyglutamine-binding protein 1 (PQBP1) (Bos taurus (Bovine)).